Here is a 236-residue protein sequence, read N- to C-terminus: uncharacterized protein (236 aa).

The first 29 residues, 1-29 (MKGGDKMKKLILLMLLLPISLIGCTDEES), serve as a signal peptide directing secretion.

This is an uncharacterized protein from Archaeoglobus fulgidus (strain ATCC 49558 / DSM 4304 / JCM 9628 / NBRC 100126 / VC-16).